The following is a 673-amino-acid chain: F420-dependent formate dehydrogenase subunit alpha (673 aa).

Residues 3 to 59 (FKIVNTICPYCGVGCGLGLVVKDGRVIGIHPNKRHPINEGKLCAKGNYCYQFIHSKD) form the 4Fe-4S Mo/W bis-MGD-type domain. Positions 10, 13, 17, and 45 each coordinate [4Fe-4S] cluster. Selenocysteine 131 is a non-standard amino acid (selenocysteine).

Belongs to the prokaryotic molybdopterin-containing oxidoreductase family. Dimer of an alpha (FdhA) and a beta (FdhB) subunit. [4Fe-4S] cluster is required as a cofactor. Requires Mo-bis(molybdopterin guanine dinucleotide) as cofactor. The cofactor is Zn(2+).

The enzyme catalyses oxidized coenzyme F420-(gamma-L-Glu)(n) + formate + 2 H(+) = reduced coenzyme F420-(gamma-L-Glu)(n) + CO2. Catalyzes the oxidation of formate to carbon dioxide, with coenzyme F420 as the electron acceptor. The polypeptide is F420-dependent formate dehydrogenase subunit alpha (fdhA) (Methanocaldococcus jannaschii (strain ATCC 43067 / DSM 2661 / JAL-1 / JCM 10045 / NBRC 100440) (Methanococcus jannaschii)).